A 355-amino-acid chain; its full sequence is Probable butyrate kinase (355 aa).

This sequence belongs to the acetokinase family.

Its subcellular location is the cytoplasm. The enzyme catalyses butanoate + ATP = butanoyl phosphate + ADP. The sequence is that of Probable butyrate kinase from Listeria welshimeri serovar 6b (strain ATCC 35897 / DSM 20650 / CCUG 15529 / CIP 8149 / NCTC 11857 / SLCC 5334 / V8).